Here is a 245-residue protein sequence, read N- to C-terminus: MKAGHKTIDKSYMHVSLIFYSIIIFMNMPDFIIFETPMEYKPVLYFQRKLVDLRNNDKIDDTFIFLEHNDVYTAGVHYRGNDDIIRVERGGYETYHGPGQLVVYFIINLRERKMNALDLIKKIQNSVVNTLKYYNIESYPMLNEKTGVWHEDRKICSIGIAIRGFSTFHGMALNVNTDLSKFNRIMPCNFSPDIMTSMERISGRPFNINSVRERLIQSIEKEFDIKEKNIYKNVDLVGYGNGLLP.

Residues 38-227 form the BPL/LPL catalytic domain; that stretch reads MEYKPVLYFQ…SIEKEFDIKE (190 aa). Substrate-binding positions include 89-96, 157-159, and 170-172; these read RGGYETYH, SIG, and GMA. Cysteine 188 (acyl-thioester intermediate) is an active-site residue.

Belongs to the LipB family.

The protein resides in the cytoplasm. It catalyses the reaction octanoyl-[ACP] + L-lysyl-[protein] = N(6)-octanoyl-L-lysyl-[protein] + holo-[ACP] + H(+). It participates in protein modification; protein lipoylation via endogenous pathway; protein N(6)-(lipoyl)lysine from octanoyl-[acyl-carrier-protein]: step 1/2. Its function is as follows. Catalyzes the transfer of endogenously produced octanoic acid from octanoyl-acyl-carrier-protein onto the lipoyl domains of lipoate-dependent enzymes. Lipoyl-ACP can also act as a substrate although octanoyl-ACP is likely to be the physiological substrate. The sequence is that of Probable octanoyltransferase 2 from Picrophilus torridus (strain ATCC 700027 / DSM 9790 / JCM 10055 / NBRC 100828 / KAW 2/3).